Reading from the N-terminus, the 401-residue chain is Argininosuccinate synthase (401 aa).

Residues Ala7 to Ser15 and Ala34 each bind ATP. Residues Tyr85 and Ser90 each coordinate L-citrulline. Gly115 is a binding site for ATP. Thr117, Asn121, and Asp122 together coordinate L-aspartate. Asn121 lines the L-citrulline pocket. L-citrulline is bound by residues Arg125, Ser174, Ser183, Glu259, and Tyr271.

Belongs to the argininosuccinate synthase family. Type 1 subfamily. As to quaternary structure, homotetramer.

It localises to the cytoplasm. The enzyme catalyses L-citrulline + L-aspartate + ATP = 2-(N(omega)-L-arginino)succinate + AMP + diphosphate + H(+). It functions in the pathway amino-acid biosynthesis; L-arginine biosynthesis; L-arginine from L-ornithine and carbamoyl phosphate: step 2/3. The chain is Argininosuccinate synthase from Desulfitobacterium hafniense (strain DSM 10664 / DCB-2).